We begin with the raw amino-acid sequence, 162 residues long: Gas vesicle protein I (162 aa).

The interval 1–162 is disordered; the sequence is MTGKQHQKHE…AERQRGGADE (162 aa). 2 stretches are compositionally biased toward basic and acidic residues: residues 22-37 and 47-64; these read INRD…QREK and RQSE…HDTQ. Polar residues-rich tracts occupy residues 65-74 and 81-110; these read SETQRGTQSK and TGGT…SHST. 2 stretches are compositionally biased toward basic and acidic residues: residues 122–142 and 151–162; these read ARER…EDKS and PKAERQRGGADE.

It belongs to the gas vesicle GvpI family. As to quaternary structure, gvpF to GvpM interact with each other in vitro, and may form multi-subunit complex(es). Interacts with GvpC and GvpO.

It is found in the gas vesicle. Proteins GvpF to GvpM might be involved in nucleating gas vesicle formation. A minor component of the gas vesicle. Gas vesicles are hollow, gas filled proteinaceous nanostructures found in some microorganisms. They allow positioning of halobacteria at the optimal depth for growth in the poorly aerated, shallow brine pools of their habitat. Functionally, expression of a 9.5 kb mc-vac DNA fragment containing 2 divergently transcribed regions (gvpD-gvpE-gvpF-gvpG-gvpH-gvpI-gvpJ-gvpK-gvpL-gvpM and gvpA-gvpC-gvpN-gvpO) allows H.volcanii to produce gas vesicles. This chain is Gas vesicle protein I, found in Haloferax mediterranei (strain ATCC 33500 / DSM 1411 / JCM 8866 / NBRC 14739 / NCIMB 2177 / R-4) (Halobacterium mediterranei).